Reading from the N-terminus, the 659-residue chain is Alpha-galactosidase D (659 aa).

Positions 1 to 20 are cleaved as a signal peptide; it reads MRALVPMVVAATALASPAPA. N48, N86, and N130 each carry an N-linked (GlcNAc...) asparagine glycan. Residues C125 and C158 are joined by a disulfide bond. D156 (nucleophile) is an active-site residue. The N-linked (GlcNAc...) asparagine glycan is linked to N183. 201–205 contributes to the substrate binding site; the sequence is EWGID. The Proton donor role is filled by D223. 5 N-linked (GlcNAc...) asparagine glycosylation sites follow: N438, N450, N484, N551, and N583.

This sequence belongs to the glycosyl hydrolase 27 family.

Its subcellular location is the secreted. It carries out the reaction Hydrolysis of terminal, non-reducing alpha-D-galactose residues in alpha-D-galactosides, including galactose oligosaccharides, galactomannans and galactolipids.. Its function is as follows. Hydrolyzes a variety of simple alpha-D-galactoside as well as more complex molecules such as oligosaccharides and polysaccharides. Active on paranitrophenyl-alpha-galactoside but not on raffinose, locust bean gum and gum guar. The polypeptide is Alpha-galactosidase D (aglD) (Emericella nidulans (strain FGSC A4 / ATCC 38163 / CBS 112.46 / NRRL 194 / M139) (Aspergillus nidulans)).